The primary structure comprises 442 residues: Type 3 secretion system ATPase (442 aa).

173-178 (GVGKST) provides a ligand contact to ATP.

The protein belongs to the ATPase alpha/beta chains family. T3SS ATPase subfamily. In terms of assembly, the core secretion machinery of the T3SS is composed of approximately 20 different proteins, including cytoplasmic components, a base, an export apparatus and a needle. This subunit is part of the cytosolic complex. Forms homohexamers.

It localises to the cytoplasm. It carries out the reaction ATP + H2O + cellular proteinSide 1 = ADP + phosphate + cellular proteinSide 2.. In terms of biological role, ATPase component of the type III secretion system (T3SS), also called injectisome, which is used to inject bacterial effector proteins into eukaryotic host cells. Acts as a molecular motor to provide the energy that is required for the export of proteins. Required for type III secretion apparatus (T3SA) formation, proper protein secretion, host cell invasion and virulence. May play a critical role in T3SS substrate recognition, disassembly of the effector/chaperone complex and unfolding of the effector in an ATP-dependent manner prior to secretion. The sequence is that of Type 3 secretion system ATPase from Xanthomonas euvesicatoria.